The chain runs to 427 residues: Glutamate-1-semialdehyde 2,1-aminomutase (427 aa).

An N6-(pyridoxal phosphate)lysine modification is found at Lys265.

It belongs to the class-III pyridoxal-phosphate-dependent aminotransferase family. HemL subfamily. Homodimer. Pyridoxal 5'-phosphate serves as cofactor.

Its subcellular location is the cytoplasm. It carries out the reaction (S)-4-amino-5-oxopentanoate = 5-aminolevulinate. It participates in porphyrin-containing compound metabolism; protoporphyrin-IX biosynthesis; 5-aminolevulinate from L-glutamyl-tRNA(Glu): step 2/2. The chain is Glutamate-1-semialdehyde 2,1-aminomutase from Edwardsiella ictaluri (strain 93-146).